Here is a 453-residue protein sequence, read N- to C-terminus: MSGFNGTSTSSNSILSERQKDELHKSILDYFKTNNLHESFATLMREANQEGFVPDPRAKYAGLLEKKWTSVIRLQKKIMEMESRISQLQEELSAAPSAKRSASLNDWLPAASSARHTMQGHRLPVTKVSFHPVFSQIASASEDTTVKLWDWETGDFERTLKGHTKAVQDVDFDSKGNYVLSCSSDLSIKVWDANNDYKNIKTLQGHDHSVSSVRFLPGDDYIVSASRDKTIKIWEFSTGFCTKTLQGHAEWVRSAIPSDDAKWLVSCSTDQTARVWDVSSGETKVELRGHEHVVEVAIFAPVASYAAIRQLASLDPNASKDASASMAGQFVATGSRDKTIRIWDSISGQCLKTLTGHDNWVRGLAFSPNGKSLLSVSDDKTMRLWDLQSGRCTRTIEAHQHFATGIAWGKAKIEAPIPPAQDGEEAGRKQPEARTVNVVATSSVDLTIKIWTP.

The LisH domain maps to 19 to 51 (QKDELHKSILDYFKTNNLHESFATLMREANQEG). Positions 69-96 (TSVIRLQKKIMEMESRISQLQEELSAAP) form a coiled coil. WD repeat units follow at residues 120–161 (GHRL…RTLK), 162–201 (GHTKAVQDVDFDSKGNYVLSCSSDLSIKVWDANNDYKNIK), 205–244 (GHDHSVSSVRFLPGDDYIVSASRDKTIKIWEFSTGFCTKT), 247–286 (GHAEWVRSAIPSDDAKWLVSCSTDQTARVWDVSSGETKVE), 314–355 (LDPN…KTLT), 356–395 (GHDNWVRGLAFSPNGKSLLSVSDDKTMRLWDLQSGRCTRT), and 413–452 (IEAPIPPAQDGEEAGRKQPEARTVNVVATSSVDLTIKIWT).

The protein belongs to the WD repeat LIS1/nudF family. Self-associates. Interacts with NDL1 and dynein.

It localises to the cytoplasm. Its subcellular location is the cytoskeleton. The protein resides in the spindle pole. Its function is as follows. Positively regulates the activity of the minus-end directed microtubule motor protein dynein. May enhance dynein-mediated microtubule sliding by targeting dynein to the microtubule plus end. Required for nuclear migration during vegetative growth as well as development. Required for localization of dynein to the mitotic spindle poles. Recruits additional proteins to the dynein complex at SPBs. Required for retrograde early endosome (EE) transport from the hyphal tip. The protein is Nuclear distribution protein PAC1 of Mycosarcoma maydis (Corn smut fungus).